The chain runs to 231 residues: uncharacterized protein (231 aa).

A run of 5 helical transmembrane segments spans residues 36–56, 58–78, 83–103, 143–163, and 170–190; these read SLLA…SFFI, SQVT…ALQW, APLN…TLTP, FTVM…ASLL, and SIVN…YILY.

It belongs to the BI1 family.

It localises to the cell membrane. This is an uncharacterized protein from Campylobacter jejuni subsp. jejuni serotype O:2 (strain ATCC 700819 / NCTC 11168).